We begin with the raw amino-acid sequence, 502 residues long: uncharacterized protein (502 aa).

This is an uncharacterized protein from Agrobacterium vitis (Rhizobium vitis).